The primary structure comprises 353 residues: Quinolinate synthase (353 aa).

Positions 47 and 68 each coordinate iminosuccinate. A [4Fe-4S] cluster-binding site is contributed by cysteine 113. Iminosuccinate is bound by residues 139–141 and serine 156; that span reads YAN. Cysteine 200 contacts [4Fe-4S] cluster. Iminosuccinate is bound by residues 226-228 and threonine 243; that span reads HPE. Cysteine 297 serves as a coordination point for [4Fe-4S] cluster.

Belongs to the quinolinate synthase family. Type 1 subfamily. The cofactor is [4Fe-4S] cluster.

Its subcellular location is the cytoplasm. It catalyses the reaction iminosuccinate + dihydroxyacetone phosphate = quinolinate + phosphate + 2 H2O + H(+). It participates in cofactor biosynthesis; NAD(+) biosynthesis; quinolinate from iminoaspartate: step 1/1. Functionally, catalyzes the condensation of iminoaspartate with dihydroxyacetone phosphate to form quinolinate. This is Quinolinate synthase from Vibrio cholerae serotype O1 (strain ATCC 39541 / Classical Ogawa 395 / O395).